Reading from the N-terminus, the 405-residue chain is Replication factor C large subunit (405 aa).

Position 47–54 (47–54 (GPPGVGKT)) interacts with ATP.

Belongs to the activator 1 small subunits family. RfcL subfamily. As to quaternary structure, heteromultimer composed of small subunits (RfcS) and large subunits (RfcL).

Part of the RFC clamp loader complex which loads the PCNA sliding clamp onto DNA. The sequence is that of Replication factor C large subunit from Saccharolobus islandicus (strain Y.N.15.51 / Yellowstone #2) (Sulfolobus islandicus).